The sequence spans 333 residues: Glycerol-3-phosphate dehydrogenase [NAD(P)+] (333 aa).

Residues Trp-16, Arg-36, and Lys-109 each contribute to the NADPH site. The sn-glycerol 3-phosphate site is built by Lys-109, Gly-137, and Ser-139. NADPH is bound at residue Ala-141. 5 residues coordinate sn-glycerol 3-phosphate: Lys-192, Asp-245, Ser-255, Arg-256, and Asn-257. Lys-192 (proton acceptor) is an active-site residue. NADPH is bound at residue Arg-256. NADPH is bound by residues Val-280 and Glu-282.

Belongs to the NAD-dependent glycerol-3-phosphate dehydrogenase family.

The protein localises to the cytoplasm. The catalysed reaction is sn-glycerol 3-phosphate + NAD(+) = dihydroxyacetone phosphate + NADH + H(+). The enzyme catalyses sn-glycerol 3-phosphate + NADP(+) = dihydroxyacetone phosphate + NADPH + H(+). It functions in the pathway membrane lipid metabolism; glycerophospholipid metabolism. Catalyzes the reduction of the glycolytic intermediate dihydroxyacetone phosphate (DHAP) to sn-glycerol 3-phosphate (G3P), the key precursor for phospholipid synthesis. In Parvibaculum lavamentivorans (strain DS-1 / DSM 13023 / NCIMB 13966), this protein is Glycerol-3-phosphate dehydrogenase [NAD(P)+].